Reading from the N-terminus, the 437-residue chain is Enolase 1 (437 aa).

(2R)-2-phosphoglycerate is bound at residue glutamine 164. Glutamate 206 acts as the Proton donor in catalysis. Residues aspartate 244, glutamate 289, and aspartate 316 each contribute to the Mg(2+) site. (2R)-2-phosphoglycerate is bound by residues lysine 341, arginine 370, serine 371, and lysine 392. The active-site Proton acceptor is lysine 341.

The protein belongs to the enolase family. It depends on Mg(2+) as a cofactor.

The protein localises to the cytoplasm. The protein resides in the secreted. Its subcellular location is the cell surface. It carries out the reaction (2R)-2-phosphoglycerate = phosphoenolpyruvate + H2O. It participates in carbohydrate degradation; glycolysis; pyruvate from D-glyceraldehyde 3-phosphate: step 4/5. In terms of biological role, catalyzes the reversible conversion of 2-phosphoglycerate (2-PG) into phosphoenolpyruvate (PEP). It is essential for the degradation of carbohydrates via glycolysis. The chain is Enolase 1 from Desulfitobacterium hafniense (strain Y51).